The sequence spans 125 residues: 14 kDa phosphohistidine phosphatase (125 aa).

N-acetylalanine is present on Ala-2. Residue Lys-21 coordinates substrate. His-53 acts as the Proton acceptor in catalysis. 94–96 contacts substrate; the sequence is SMG.

Monomer.

It localises to the cytoplasm. The enzyme catalyses N(pros)-phospho-L-histidyl-[protein] + H2O = L-histidyl-[protein] + phosphate. It carries out the reaction N(tele)-phospho-L-histidyl-[protein] + H2O = L-histidyl-[protein] + phosphate. In terms of biological role, exhibits phosphohistidine phosphatase activity. Functionally, may have a significant involvement in neuronal signaling. The chain is 14 kDa phosphohistidine phosphatase (PHPT1) from Oryctolagus cuniculus (Rabbit).